Here is a 248-residue protein sequence, read N- to C-terminus: Pyridoxine 5'-phosphate synthase (248 aa).

N12 lines the 3-amino-2-oxopropyl phosphate pocket. D14 to H15 provides a ligand contact to 1-deoxy-D-xylulose 5-phosphate. Position 23 (R23) interacts with 3-amino-2-oxopropyl phosphate. Catalysis depends on H48, which acts as the Proton acceptor. 1-deoxy-D-xylulose 5-phosphate contacts are provided by R50 and H55. E75 functions as the Proton acceptor in the catalytic mechanism. T105 provides a ligand contact to 1-deoxy-D-xylulose 5-phosphate. H196 serves as the catalytic Proton donor. 3-amino-2-oxopropyl phosphate contacts are provided by residues G197 and G218 to H219.

The protein belongs to the PNP synthase family. In terms of assembly, homooctamer; tetramer of dimers.

The protein resides in the cytoplasm. It catalyses the reaction 3-amino-2-oxopropyl phosphate + 1-deoxy-D-xylulose 5-phosphate = pyridoxine 5'-phosphate + phosphate + 2 H2O + H(+). It participates in cofactor biosynthesis; pyridoxine 5'-phosphate biosynthesis; pyridoxine 5'-phosphate from D-erythrose 4-phosphate: step 5/5. Catalyzes the complicated ring closure reaction between the two acyclic compounds 1-deoxy-D-xylulose-5-phosphate (DXP) and 3-amino-2-oxopropyl phosphate (1-amino-acetone-3-phosphate or AAP) to form pyridoxine 5'-phosphate (PNP) and inorganic phosphate. This Azotobacter vinelandii (strain DJ / ATCC BAA-1303) protein is Pyridoxine 5'-phosphate synthase.